The following is a 190-amino-acid chain: MARHVFLTGPPGVGKTTLIHKASEVLKSSGVPVDGFYTEEVRQGGRRIGFDVVTLSGTRGPLSRVGLEPPPGKRECRVGQYVVDLTSFEQLALPVLRNADCSSGPGQRVCVIDEIGKMELFSQLFIQAVRQTLSTPGTIILGTIPVPKGKPLALVEEIRNRKDVKVFNVTKENRNHLLPDIVTCVQSSRK.

The residue at position 2 (Ala-2) is an N-acetylalanine. Residues 9–16 (GPPGVGKT) and 109–116 (VCVIDEIG) contribute to the ATP site. The residue at position 165 (Lys-165) is an N6-acetyllysine.

Belongs to the THEP1 NTPase family. In terms of assembly, monomer.

The enzyme catalyses a ribonucleoside 5'-triphosphate + H2O = a ribonucleoside 5'-diphosphate + phosphate + H(+). The catalysed reaction is 5-methyl-UTP + H2O = 5-methyl-UDP + phosphate + H(+). It catalyses the reaction CTP + H2O = CDP + phosphate + H(+). It carries out the reaction ATP + H2O = ADP + phosphate + H(+). The enzyme catalyses GTP + H2O = GDP + phosphate + H(+). In terms of biological role, has nucleotide phosphatase activity towards ATP, GTP, CTP, TTP and UTP. Hydrolyzes nucleoside diphosphates with lower efficiency. This is Cancer-related nucleoside-triphosphatase from Homo sapiens (Human).